A 162-amino-acid chain; its full sequence is Caveolin-2 (162 aa).

At 1 to 86 (MGLETEKADV…FEISKYVIYK (86 aa)) the chain is on the cytoplasmic side. Tyr19 carries the phosphotyrosine; by SRC modification. Ser20 and Ser23 each carry phosphoserine. The residue at position 27 (Tyr27) is a Phosphotyrosine; by SRC. Ser36 is subject to Phosphoserine. An intramembrane region (helical) is located at residues 87-107 (FLTLFLAIPLAFAAGILFATL). Residues 108-162 (SCLHIWIIMPFVKTCLMVLPSVQTIWKSITDVVIAPLCTSVGRSFSSVSLQLSHD) lie on the Cytoplasmic side of the membrane.

It belongs to the caveolin family. Monomer or homodimer. Interacts with CAV1; the interaction forms a stable heterooligomeric complex that is required for targeting to lipid rafts and for caveolae formation. Tyrosine phosphorylated forms do not form heterooligomers with the Tyr-19-phosphorylated form existing as a monomer or dimer, and the Tyr-27-form as a monomer only. Interacts (tyrosine phosphorylated form) with the SH2 domain-containing proteins, RASA1, NCK1 and SRC. Interacts (tyrosine phosphorylated form) with INSR, the interaction (Tyr-27-phosphorylated form) is increased on insulin stimulation. Interacts (Tyr-19 phosphorylated form) with MAPK1 (phosphorylated form); the interaction, promoted by insulin, leads to nuclear location and MAPK1 activation. Interacts with STAT3; the interaction is increased on insulin-induced tyrosine phosphorylation leading to STAT activation. In terms of processing, phosphorylated on serine and tyrosine residues. CAV1 promotes phosphorylation on Ser-23 which then targets the complex to the plasma membrane, lipid rafts and caveolae. Phosphorylation on Ser-36 appears to modulate mitosis in endothelial cells. Phosphorylation on both Tyr-19 and Tyr-27 is required for insulin-induced 'Ser-727' phosphorylation of STAT3 and its activation. Phosphorylation on Tyr-19 is required for insulin-induced phosphorylation of MAPK1 and DNA binding of STAT3. Tyrosine phosphorylation is induced by both EGF and insulin (By. similarity).

It localises to the nucleus. Its subcellular location is the cytoplasm. The protein localises to the golgi apparatus membrane. It is found in the cell membrane. The protein resides in the membrane. It localises to the caveola. In terms of biological role, may act as a scaffolding protein within caveolar membranes. Interacts directly with G-protein alpha subunits and can functionally regulate their activity. Acts as an accessory protein in conjunction with CAV1 in targeting to lipid rafts and driving caveolae formation. The Ser-36 phosphorylated form has a role in modulating mitosis in endothelial cells. Positive regulator of cellular mitogenesis of the MAPK signaling pathway. Required for the insulin-stimulated nuclear translocation and activation of MAPK1 and STAT3, and the subsequent regulation of cell cycle progression. The protein is Caveolin-2 (CAV2) of Neofelis nebulosa (Clouded leopard).